The sequence spans 26 residues: uncharacterized protein (26 aa).

The protein localises to the plastid. The protein resides in the chloroplast. This is an uncharacterized protein from Trieres chinensis (Marine centric diatom).